Reading from the N-terminus, the 324-residue chain is Lipid droplet-associated hydrolase (324 aa).

The Nucleophile role is filled by serine 136. Catalysis depends on charge relay system residues aspartate 270 and histidine 299.

It belongs to the AB hydrolase superfamily. LDAH family.

The protein resides in the lipid droplet. It localises to the endoplasmic reticulum. It carries out the reaction a cholesterol ester + H2O = cholesterol + a fatty acid + H(+). Its function is as follows. Probable serine lipid hydrolase associated with lipid droplets. Has low cholesterol esterase activity. Appears to lack triglyceride lipase activity. Involved in cholesterol and triglyceride homeostasis; stimulates cellular triglyceride accumulation and cellular cholesterol release. This chain is Lipid droplet-associated hydrolase, found in Gallus gallus (Chicken).